Reading from the N-terminus, the 260-residue chain is MGRVIRAQRKGAAGSVFKSHTHHRKGPAKFRSLDYGERNGYLKGLVTEIIHDPGRGAPLARVAFRHPFRYMKQKELFVAAEGMYTGQYLYCGKKANLMVGNVLPLGSIPEGAVICNVELHVGDRGALARASGDYAIVIAHNPESNTTRVKLPSGSKKILPSACRAMIGQVAGGGRTEKPLLKAGNAYHKYKAKRNCWPVVRGVAMNPVEHPHGGGNHQHIGHASTVRRDKSAGAKVGQIAARRTGRRRGAAATLAAKADY.

The interval 227–248 is disordered; that stretch reads RRDKSAGAKVGQIAARRTGRRR.

It belongs to the universal ribosomal protein uL2 family.

The protein is Large ribosomal subunit protein uL2y (RPL8B) of Arabidopsis thaliana (Mouse-ear cress).